Consider the following 160-residue polypeptide: Major strawberry allergen Fra a 1-B (160 aa).

This sequence belongs to the BetVI family. In terms of assembly, monomer.

The sequence is that of Major strawberry allergen Fra a 1-B from Fragaria ananassa (Strawberry).